A 257-amino-acid polypeptide reads, in one-letter code: Ribonuclease PH (257 aa).

Residues R87 and 125-127 (GTR) each bind phosphate.

Belongs to the RNase PH family. As to quaternary structure, homohexameric ring arranged as a trimer of dimers.

The catalysed reaction is tRNA(n+1) + phosphate = tRNA(n) + a ribonucleoside 5'-diphosphate. Its function is as follows. Phosphorolytic 3'-5' exoribonuclease that plays an important role in tRNA 3'-end maturation. Removes nucleotide residues following the 3'-CCA terminus of tRNAs; can also add nucleotides to the ends of RNA molecules by using nucleoside diphosphates as substrates, but this may not be physiologically important. Probably plays a role in initiation of 16S rRNA degradation (leading to ribosome degradation) during starvation. This chain is Ribonuclease PH, found in Geobacillus kaustophilus (strain HTA426).